The following is a 691-amino-acid chain: Proprotein convertase subtilisin/kexin type 9 (691 aa).

Residues 1 to 29 form the signal peptide; it reads MGTVSSRRLWWPLPLLLLLLLLGPAGARA. The propeptide occupies 30–151; it reads QEDDDGDYEE…IEEDSSVFAQ (122 aa). Residue Y37 is modified to Sulfotyrosine. S46 bears the Phosphoserine mark. The region spanning 76 to 148 is the Inhibitor I9 domain; that stretch reads TYVVVLKEET…VDYIEEDSSV (73 aa). One can recognise a Peptidase S8 domain in the interval 154-460; that stretch reads PWNLERITPA…GWQLFCRTVW (307 aa). Active-site charge relay system residues include D185 and H225. Intrachain disulfides connect C222/C254 and C322/C357. S385 serves as the catalytic Charge relay system. The interval 449 to 691 is C-terminal domain; sequence GAGWQLFCRT…HLAQASQELQ (243 aa). Intrachain disulfides connect C456/C526, C476/C525, and C485/C508. N-linked (GlcNAc...) asparagine glycosylation occurs at N532. 6 cysteine pairs are disulfide-bonded: C533-C600, C551-C599, C561-C587, C607-C678, C625-C677, and C634-C653. S687 is subject to Phosphoserine.

Belongs to the peptidase S8 family. Monomer. Can self-associate to form dimers and higher multimers which may have increased LDLR degrading activity. The precursor protein but not the mature protein may form multimers. Interacts with APOB, VLDLR, LRP8/APOER2 and BACE1. The full-length immature form (pro-PCSK9) interacts with SCNN1A, SCNN1B and SCNN1G. The pro-PCSK9 form (via C-terminal domain) interacts with LDLR. Interacts (via the C-terminal domain) with ANXA2 (via repeat Annexin 1); the interaction inhibits the degradation of LDLR. The cofactor is Ca(2+). In terms of processing, cleavage by furin and PCSK5 generates a truncated inactive protein that is unable to induce LDLR degradation. Undergoes autocatalytic cleavage in the endoplasmic reticulum to release the propeptide from the N-terminus and the cleavage of the propeptide is strictly required for its maturation and activation. The cleaved propeptide however remains associated with the catalytic domain through non-covalent interactions, preventing potential substrates from accessing its active site. As a result, it is secreted from cells as a propeptide-containing, enzymatically inactive protein. Post-translationally, phosphorylation protects the propeptide against proteolysis.

Its subcellular location is the cytoplasm. It localises to the secreted. The protein localises to the endosome. The protein resides in the lysosome. It is found in the cell surface. Its subcellular location is the endoplasmic reticulum. It localises to the golgi apparatus. With respect to regulation, its proteolytic activity is autoinhibited by the non-covalent binding of the propeptide to the catalytic domain. Inhibited by EGTA. In terms of biological role, crucial player in the regulation of plasma cholesterol homeostasis. Binds to low-density lipid receptor family members: low density lipoprotein receptor (LDLR), very low density lipoprotein receptor (VLDLR), apolipoprotein E receptor (LRP1/APOER) and apolipoprotein receptor 2 (LRP8/APOER2), and promotes their degradation in intracellular acidic compartments. Acts via a non-proteolytic mechanism to enhance the degradation of the hepatic LDLR through a clathrin LDLRAP1/ARH-mediated pathway. May prevent the recycling of LDLR from endosomes to the cell surface or direct it to lysosomes for degradation. Can induce ubiquitination of LDLR leading to its subsequent degradation. Inhibits intracellular degradation of APOB via the autophagosome/lysosome pathway in a LDLR-independent manner. Involved in the disposal of non-acetylated intermediates of BACE1 in the early secretory pathway. Inhibits epithelial Na(+) channel (ENaC)-mediated Na(+) absorption by reducing ENaC surface expression primarily by increasing its proteasomal degradation. Regulates neuronal apoptosis via modulation of LRP8/APOER2 levels and related anti-apoptotic signaling pathways. This chain is Proprotein convertase subtilisin/kexin type 9 (PCSK9), found in Saimiri boliviensis boliviensis (Bolivian squirrel monkey).